Reading from the N-terminus, the 243-residue chain is 1-(5-phosphoribosyl)-5-[(5-phosphoribosylamino)methylideneamino] imidazole-4-carboxamide isomerase (243 aa).

Asp9 (proton acceptor) is an active-site residue. The active-site Proton donor is Asp131.

It belongs to the HisA/HisF family.

Its subcellular location is the cytoplasm. The catalysed reaction is 1-(5-phospho-beta-D-ribosyl)-5-[(5-phospho-beta-D-ribosylamino)methylideneamino]imidazole-4-carboxamide = 5-[(5-phospho-1-deoxy-D-ribulos-1-ylimino)methylamino]-1-(5-phospho-beta-D-ribosyl)imidazole-4-carboxamide. Its pathway is amino-acid biosynthesis; L-histidine biosynthesis; L-histidine from 5-phospho-alpha-D-ribose 1-diphosphate: step 4/9. The protein is 1-(5-phosphoribosyl)-5-[(5-phosphoribosylamino)methylideneamino] imidazole-4-carboxamide isomerase of Campylobacter jejuni (strain RM1221).